The following is a 326-amino-acid chain: Undecaprenyl-phosphate 4-deoxy-4-formamido-L-arabinose transferase (326 aa).

A run of 2 helical transmembrane segments spans residues Leu235 to Ile255 and Val270 to Leu290.

This sequence belongs to the glycosyltransferase 2 family.

The protein localises to the cell inner membrane. The enzyme catalyses UDP-4-deoxy-4-formamido-beta-L-arabinose + di-trans,octa-cis-undecaprenyl phosphate = 4-deoxy-4-formamido-alpha-L-arabinopyranosyl di-trans,octa-cis-undecaprenyl phosphate + UDP. It participates in glycolipid biosynthesis; 4-amino-4-deoxy-alpha-L-arabinose undecaprenyl phosphate biosynthesis; 4-amino-4-deoxy-alpha-L-arabinose undecaprenyl phosphate from UDP-4-deoxy-4-formamido-beta-L-arabinose and undecaprenyl phosphate: step 1/2. The protein operates within bacterial outer membrane biogenesis; lipopolysaccharide biosynthesis. In terms of biological role, catalyzes the transfer of 4-deoxy-4-formamido-L-arabinose from UDP to undecaprenyl phosphate. The modified arabinose is attached to lipid A and is required for resistance to polymyxin and cationic antimicrobial peptides. The sequence is that of Undecaprenyl-phosphate 4-deoxy-4-formamido-L-arabinose transferase from Serratia proteamaculans (strain 568).